We begin with the raw amino-acid sequence, 479 residues long: Aspartyl/glutamyl-tRNA(Asn/Gln) amidotransferase subunit B (479 aa).

This sequence belongs to the GatB/GatE family. GatB subfamily. As to quaternary structure, heterotrimer of A, B and C subunits.

The catalysed reaction is L-glutamyl-tRNA(Gln) + L-glutamine + ATP + H2O = L-glutaminyl-tRNA(Gln) + L-glutamate + ADP + phosphate + H(+). It catalyses the reaction L-aspartyl-tRNA(Asn) + L-glutamine + ATP + H2O = L-asparaginyl-tRNA(Asn) + L-glutamate + ADP + phosphate + 2 H(+). Functionally, allows the formation of correctly charged Asn-tRNA(Asn) or Gln-tRNA(Gln) through the transamidation of misacylated Asp-tRNA(Asn) or Glu-tRNA(Gln) in organisms which lack either or both of asparaginyl-tRNA or glutaminyl-tRNA synthetases. The reaction takes place in the presence of glutamine and ATP through an activated phospho-Asp-tRNA(Asn) or phospho-Glu-tRNA(Gln). The sequence is that of Aspartyl/glutamyl-tRNA(Asn/Gln) amidotransferase subunit B from Geotalea uraniireducens (strain Rf4) (Geobacter uraniireducens).